Reading from the N-terminus, the 333-residue chain is Taste receptor type 2 member 38 (333 aa).

The Extracellular portion of the chain corresponds to 1-17 (MLTLTRIHTVSYEVRST). The chain crosses the membrane as a helical span at residues 18 to 38 (FLFISVLEFAVGFLTNAFVFL). Over 39–55 (VNFWDVVKRQPLSNSDC) the chain is Cytoplasmic. A helical transmembrane segment spans residues 56 to 76 (VLLCLSISRLFLHGLLFLSAI). Topologically, residues 77–94 (QLTHFQKLSEPLNHSYQA) are extracellular. Residues 95 to 115 (IIMLWMIANQANLWLAACLSL) traverse the membrane as a helical segment. Over 116–142 (LYCSKLIRFSHTFLICLASWVSRKISQ) the chain is Cytoplasmic. The helical transmembrane segment at 143-163 (MLLGIILCSCICTVLCVWCFF) threads the bilayer. At 164 to 190 (SRPHFTVTTVLFMNNNTRLNWQIKDLN) the chain is on the extracellular side. An N-linked (GlcNAc...) asparagine glycan is attached at Asn178. The helical transmembrane segment at 191-211 (LFYSFLFCYLWSVPPFLLFLV) threads the bilayer. Residues 212–251 (SSGMLTVSLGRHMRTMKVYTRDSRDPSLEAHIKALKSLVS) lie on the Cytoplasmic side of the membrane. The helical transmembrane segment at 252–272 (FFCFFVISSCAAFISVPLLIL) threads the bilayer. The Extracellular portion of the chain corresponds to 273–276 (WRDK). The helical transmembrane segment at 277-297 (IGVMVCVGIMAACPSGHAAVL) threads the bilayer. The Cytoplasmic portion of the chain corresponds to 298 to 333 (ISGNAKLRRAVTTILLWAQSSLKVRADHKADSRTLC).

It belongs to the G-protein coupled receptor T2R family.

The protein localises to the membrane. Receptor that may play a role in the perception of bitterness and is gustducin-linked. May play a role in sensing the chemical composition of the gastrointestinal content. The activity of this receptor may stimulate alpha gustducin, mediate PLC-beta-2 activation and lead to the gating of TRPM5. In Pan troglodytes (Chimpanzee), this protein is Taste receptor type 2 member 38 (TAS2R38).